A 429-amino-acid polypeptide reads, in one-letter code: Dihydroorotase (429 aa).

The Zn(2+) site is built by H61 and H63. Substrate-binding positions include H63–R65 and N95. Residues D153, H180, and H233 each contribute to the Zn(2+) site. N279 serves as a coordination point for substrate. A Zn(2+)-binding site is contributed by D306. Residue D306 is part of the active site. Substrate is bound by residues H310 and F324–G325.

The protein belongs to the metallo-dependent hydrolases superfamily. DHOase family. Class I DHOase subfamily. Zn(2+) serves as cofactor.

The catalysed reaction is (S)-dihydroorotate + H2O = N-carbamoyl-L-aspartate + H(+). Its pathway is pyrimidine metabolism; UMP biosynthesis via de novo pathway; (S)-dihydroorotate from bicarbonate: step 3/3. Catalyzes the reversible cyclization of carbamoyl aspartate to dihydroorotate. This is Dihydroorotase from Ligilactobacillus salivarius (strain UCC118) (Lactobacillus salivarius).